A 505-amino-acid chain; its full sequence is MAQVINTNSLSLLTQNNLNKSQSSLSSAIERLSSGLRINSAKDDAAGQAIANRFTSNIKGLTQASRNANDGISIAQTTEGALNEINNNLQRVRELSVQATNGTNSDSDLKSIQDEIQQRLEEIDRVSNQTQFNGVKVLSQDNQMKIQVGANDGETITIDLQKIDVKSLGLDGFNVNGPKEATVGDLKSSFKNVTGYDTYAAGADKYRVDINSGAVVTDAAAPDKVYVNAANGQLTTDDAENNTAVNLFKTTKSTAGTDEAKAIAGAIKGGKEGDTFDYKGVSFTIDTKAGNDGNGTVSTTINGEKVTLTVADITAGAANVNDATLQSSKNVYTSVVNGQFTFDDKTKNESAKLSDLEANNAVKGESKITVNGAEYTANAAGDKVTLAGKTMFIDKTASGVSTLINEDAAAAKKSTANPLASIDSALSKVDAVRSSLGAIQNRFDSAITNLGNTVTNLNSARSRIEDADYATEVSNMSKAQILQQAGTSVLAQANQVPQNVLSLLR.

Belongs to the bacterial flagellin family.

Its subcellular location is the secreted. The protein localises to the bacterial flagellum. Functionally, flagellin is the subunit protein which polymerizes to form the filaments of bacterial flagella. This Salmonella budapest protein is Flagellin (fliC).